The primary structure comprises 163 residues: Probable ribosome biogenesis protein RLP24 (163 aa).

Belongs to the eukaryotic ribosomal protein eL24 family. Associated with nucleolar and cytoplasmic pre-60S particles. At the end of biogenesis it dissociates from cytoplasmic pre-60S particles and is likely to be exchanged for its ribosomal homolog, RPL24.

The protein resides in the nucleus. The protein localises to the nucleolus. In terms of biological role, involved in the biogenesis of the 60S ribosomal subunit. Ensures the docking of GTPBP4/NOG1 to pre-60S particles. This chain is Probable ribosome biogenesis protein RLP24 (RSL24D1), found in Pongo abelii (Sumatran orangutan).